We begin with the raw amino-acid sequence, 117 residues long: Ribosome-binding factor A (117 aa).

It belongs to the RbfA family. In terms of assembly, monomer. Binds 30S ribosomal subunits, but not 50S ribosomal subunits or 70S ribosomes.

Its subcellular location is the cytoplasm. In terms of biological role, one of several proteins that assist in the late maturation steps of the functional core of the 30S ribosomal subunit. Associates with free 30S ribosomal subunits (but not with 30S subunits that are part of 70S ribosomes or polysomes). Required for efficient processing of 16S rRNA. May interact with the 5'-terminal helix region of 16S rRNA. The chain is Ribosome-binding factor A from Streptococcus thermophilus (strain CNRZ 1066).